Reading from the N-terminus, the 2443-residue chain is NFX1-type zinc finger-containing protein 1 homolog (2443 aa).

Disordered stretches follow at residues P212–H339, S545–G566, and H583–P672. Over residues I246 to P263 the composition is skewed to low complexity. Residues P275–P294 are compositionally biased toward pro residues. The segment covering S297 to H310 has biased composition (polar residues). The span at S311 to S322 shows a compositional bias: low complexity. The span at S545 to V564 shows a compositional bias: polar residues. Composition is skewed to basic and acidic residues over residues G601–Q638 and E662–P672. Residues M1040–V1545 form the UvrD-like helicase ATP-binding domain. G1061–T1068 contacts ATP. NF-X1-type zinc fingers lie at residues C1769–Y1791, C1853–Q1873, C1912–E1930, and C2027–A2044.

It belongs to the ZNFX1 family. In terms of assembly, interacts with ego-1, csr-1, wago-1 and prg-1. Interacts with wago-4; the interaction promotes the transmission of epigenetic information across generations. Expressed in germs cells. Not expressed in somatic tissues.

It localises to the cytoplasm. The protein resides in the perinuclear region. It is found in the cytoplasmic granule. It catalyses the reaction ATP + H2O = ADP + phosphate + H(+). In terms of biological role, epigenetic inheritance factor which, in association with the Argonaute protein wago-4, mediates small RNA-directed transgenerational epigenetic inheritance and thus balances the transgenerational inheritance of epigenetic information. Specifically, maintains a balanced production of small RNAs by preventing the spread of epigenetic signals towards the 5'-end of target mRNAs. Plays a role in small RNA-induced gene silencing in the germline. In Caenorhabditis elegans, this protein is NFX1-type zinc finger-containing protein 1 homolog.